The chain runs to 262 residues: Nitrate transport protein NasD (262 aa).

The ABC transporter domain occupies 5–239; the sequence is IQVQGVSQRF…RPRNRVQLAD (235 aa). 41 to 48 contacts ATP; that stretch reads GHSGCGKS.

The protein belongs to the ABC transporter superfamily.

Its subcellular location is the cell membrane. Its function is as follows. Probably part of a high-affinity binding-protein-dependent transport system for nitrate. Probably responsible for energy coupling to the transport system. The sequence is that of Nitrate transport protein NasD (nasD) from Klebsiella oxytoca.